A 92-amino-acid polypeptide reads, in one-letter code: MDAMPLSDISALGYEEARDELVRVVTELEQGSATLEESLALWERGEALARRCEEWLIGAKARLDAARAGAAESAGTAKSAVAADSRGAADSA.

The span at Ala-71–Asp-84 shows a compositional bias: low complexity. Residues Ala-71 to Ala-92 form a disordered region.

Belongs to the XseB family. In terms of assembly, heterooligomer composed of large and small subunits.

The protein localises to the cytoplasm. It carries out the reaction Exonucleolytic cleavage in either 5'- to 3'- or 3'- to 5'-direction to yield nucleoside 5'-phosphates.. Bidirectionally degrades single-stranded DNA into large acid-insoluble oligonucleotides, which are then degraded further into small acid-soluble oligonucleotides. In Leifsonia xyli subsp. xyli (strain CTCB07), this protein is Exodeoxyribonuclease 7 small subunit.